The sequence spans 661 residues: MFDKQKNRYIRVELASPDQIRNWAERTLPNGEIVGKVTKPYTLHYNSHKPEKDGLFCERIFGPIKSGICACGKYHGFVKNLPEVKFCKQCGVEFTDSKVRRYRMGYIQLAYPATHIWYLKRLPSHIATLLKMSLKEVESLVYCDLFLPRPIIKKPNLLKVKKLFNYDDQLWKETLPRFFSTRSFESFQNREMATGGDAIHKRLSSLNLQKLIFQSYNEWEKLSLQRSTGNSYEDKKIQRMKDIIIRRIKLAKQFFENNIKPEWMVLSVLPVLPPELRPMIEINQGELITSDLNELYRRVIYRNNTLIGFLNKSNSTPAGLIIYQKRLVQEAVDALIDNRIGNQIMKDRNNRPYKSFSEIIEGKEGRFRQDLLGKRVDYSGRSVIVVGPSLSLHQCGIPKDMAIELFQPFIIRDLINCQLAPNLRAARSMIQNQEPIIFKILEKIIKNHPILLNRAPTLHRLGIQAFQPILVEGLAIRLHPLVCGGFNADFDGDQMAVHIPLSLEAQAEARFLMLANSNLLSPANGEPITVPSQDMLLGLYVLTMSCKQGIYIYNEQKLKKKIPYFCNYIDVITAYEKKQINLHDPIWLKWYGNLRGTSSTKKQKLFEIQCESRGTRRKIFENWHFCENIRNRKFTIYLFTTPGRIIFNQLLEQSIQATVRI.

Positions 69, 71, 87, and 90 each coordinate Zn(2+). Residues D489, D491, and D493 each coordinate Mg(2+).

This sequence belongs to the RNA polymerase beta' chain family. RpoC1 subfamily. In plastids the minimal PEP RNA polymerase catalytic core is composed of four subunits: alpha, beta, beta', and beta''. When a (nuclear-encoded) sigma factor is associated with the core the holoenzyme is formed, which can initiate transcription. Requires Mg(2+) as cofactor. The cofactor is Zn(2+).

Its subcellular location is the plastid. It is found in the chloroplast. The catalysed reaction is RNA(n) + a ribonucleoside 5'-triphosphate = RNA(n+1) + diphosphate. Functionally, DNA-dependent RNA polymerase catalyzes the transcription of DNA into RNA using the four ribonucleoside triphosphates as substrates. The polypeptide is DNA-directed RNA polymerase subunit beta' (Chaetosphaeridium globosum (Charophycean green alga)).